Consider the following 430-residue polypeptide: Histidinol dehydrogenase (430 aa).

3 residues coordinate NAD(+): tyrosine 131, glutamine 192, and asparagine 215. Residues serine 238, glutamine 260, and histidine 263 each contribute to the substrate site. 2 residues coordinate Zn(2+): glutamine 260 and histidine 263. Residues glutamate 328 and histidine 329 each act as proton acceptor in the active site. Residues histidine 329, aspartate 362, glutamate 416, and histidine 421 each contribute to the substrate site. Aspartate 362 provides a ligand contact to Zn(2+). Histidine 421 provides a ligand contact to Zn(2+).

This sequence belongs to the histidinol dehydrogenase family. Zn(2+) is required as a cofactor.

It carries out the reaction L-histidinol + 2 NAD(+) + H2O = L-histidine + 2 NADH + 3 H(+). Its pathway is amino-acid biosynthesis; L-histidine biosynthesis; L-histidine from 5-phospho-alpha-D-ribose 1-diphosphate: step 9/9. Catalyzes the sequential NAD-dependent oxidations of L-histidinol to L-histidinaldehyde and then to L-histidine. This chain is Histidinol dehydrogenase, found in Acinetobacter baylyi (strain ATCC 33305 / BD413 / ADP1).